We begin with the raw amino-acid sequence, 64 residues long: Lingual antimicrobial peptide (64 aa).

An N-terminal signal peptide occupies residues 1–24; sequence MRLHHLLLALLFLVLSAGSGFTQG. Intrachain disulfides connect cysteine 31–cysteine 60, cysteine 38–cysteine 53, and cysteine 43–cysteine 61.

This sequence belongs to the beta-defensin family. LAP/TAP subfamily. In terms of tissue distribution, in many of the exposed epithelial surfaces including conjunctivae, bronchi, colon, urinary tract and trachea.

It localises to the secreted. Functionally, shows a broad spectrum of antibacterial and antifungal activities. The chain is Lingual antimicrobial peptide (LAP) from Bos taurus (Bovine).